A 144-amino-acid chain; its full sequence is Ribosome-binding factor A (144 aa).

A disordered region spans residues 120–144 (DKRRMAESGREEDDAAPDETTEDNA). The segment covering 129–144 (REEDDAAPDETTEDNA) has biased composition (acidic residues).

Belongs to the RbfA family. Monomer. Binds 30S ribosomal subunits, but not 50S ribosomal subunits or 70S ribosomes.

The protein localises to the cytoplasm. One of several proteins that assist in the late maturation steps of the functional core of the 30S ribosomal subunit. Associates with free 30S ribosomal subunits (but not with 30S subunits that are part of 70S ribosomes or polysomes). Required for efficient processing of 16S rRNA. May interact with the 5'-terminal helix region of 16S rRNA. This is Ribosome-binding factor A from Aeromonas hydrophila subsp. hydrophila (strain ATCC 7966 / DSM 30187 / BCRC 13018 / CCUG 14551 / JCM 1027 / KCTC 2358 / NCIMB 9240 / NCTC 8049).